The following is a 362-amino-acid chain: NAD(P)H-quinone oxidoreductase subunit 1, chloroplastic (362 aa).

The next 8 membrane-spanning stretches (helical) occupy residues Ile29–Leu49, Ile103–Leu123, Ile128–Gly148, Ala164–Leu184, Phe202–Leu222, Tyr247–Ser267, Thr303–Ile323, and Leu335–Thr355.

It belongs to the complex I subunit 1 family. In terms of assembly, NDH is composed of at least 16 different subunits, 5 of which are encoded in the nucleus.

The protein localises to the plastid. Its subcellular location is the chloroplast thylakoid membrane. The catalysed reaction is a plastoquinone + NADH + (n+1) H(+)(in) = a plastoquinol + NAD(+) + n H(+)(out). It catalyses the reaction a plastoquinone + NADPH + (n+1) H(+)(in) = a plastoquinol + NADP(+) + n H(+)(out). NDH shuttles electrons from NAD(P)H:plastoquinone, via FMN and iron-sulfur (Fe-S) centers, to quinones in the photosynthetic chain and possibly in a chloroplast respiratory chain. The immediate electron acceptor for the enzyme in this species is believed to be plastoquinone. Couples the redox reaction to proton translocation, and thus conserves the redox energy in a proton gradient. The polypeptide is NAD(P)H-quinone oxidoreductase subunit 1, chloroplastic (Triticum aestivum (Wheat)).